The following is a 311-amino-acid chain: Methionyl-tRNA formyltransferase (311 aa).

109–112 (SLLP) is a (6S)-5,6,7,8-tetrahydrofolate binding site.

Belongs to the Fmt family.

The catalysed reaction is L-methionyl-tRNA(fMet) + (6R)-10-formyltetrahydrofolate = N-formyl-L-methionyl-tRNA(fMet) + (6S)-5,6,7,8-tetrahydrofolate + H(+). Attaches a formyl group to the free amino group of methionyl-tRNA(fMet). The formyl group appears to play a dual role in the initiator identity of N-formylmethionyl-tRNA by promoting its recognition by IF2 and preventing the misappropriation of this tRNA by the elongation apparatus. In Staphylococcus aureus (strain USA300), this protein is Methionyl-tRNA formyltransferase.